The following is a 104-amino-acid chain: Nucleoid-associated protein PEPE_1483 (104 aa).

A disordered region spans residues 1–35 (MRGGMGNMQSMMRQMQKMQKKVTEEQEKLNQTEFT). A compositionally biased stretch (low complexity) spans 8–17 (MQSMMRQMQK). Basic and acidic residues predominate over residues 21–30 (KVTEEQEKLN).

Belongs to the YbaB/EbfC family. In terms of assembly, homodimer.

The protein resides in the cytoplasm. The protein localises to the nucleoid. Binds to DNA and alters its conformation. May be involved in regulation of gene expression, nucleoid organization and DNA protection. The polypeptide is Nucleoid-associated protein PEPE_1483 (Pediococcus pentosaceus (strain ATCC 25745 / CCUG 21536 / LMG 10740 / 183-1w)).